The primary structure comprises 541 residues: MFGFSGSNNGFGNKPAGSTGFSFGQNNNNTNTQPSASGFGFGGSQPNSGTATTGGFGANQATNTFGSNQQSSTGGGLFGNKPALGSLGSSSTTASGTTATGTGLFGQQTAQPQQSTIGGGLFGNKPTTTTGGLFGNSAQNNSTTSGGLFGNKVGSTGSLMGGNSTQNTSNMNAGGLFGAKPQNTTATTGGLFGSKPQGSTTNGGLFGSGTQNNNTLGGGGLFGQSQQPQTNTAPGLGNTVSTQPSFAWSKPSTGSNLQQQQQQQIQVPLQQTQAIAQQQQLSNYPQQIQEQVLKCKESWDPNTTKTKLRAFVYNKVNETEAILYTKPGHVLQEEWDQAMEKKPSPQTIPIQIYGFEGLNQRNQVQTENVAQARIILNHILEKSTQLQQKHELDTASRILKAQSRNVEIEKRILKLGTQLATLKNRGLPLGIAEEKMWSQFQTLLQRSEDPAGLGKTNELWARLAILKERAKNISSQLDSKLMVFNDDTKNQDSMSKGTGEESNDRINKIVEILTNQQRGITYLNEVLEKDAAIVKKYKNKT.

Over residues 1–13 the composition is skewed to low complexity; it reads MFGFSGSNNGFGN. Residues 1-261 form a disordered region; that stretch reads MFGFSGSNNG…STGSNLQQQQ (261 aa). FG repeat units lie at residues 2 to 3 and 11 to 12; these read FG. Over residues 19–36 the composition is skewed to polar residues; sequence TGFSFGQNNNNTNTQPSA. 2 FXFG repeats span residues 21-24 and 39-42; these read FSFG and FGFG. 2 FG repeats span residues 56 to 57 and 65 to 66; these read FG. A compositionally biased stretch (polar residues) spans 58–72; that stretch reads ANQATNTFGSNQQSS. Residues 76–79 form a GLFG 1 repeat; it reads GLFG. Low complexity predominate over residues 83–102; sequence ALGSLGSSSTTASGTTATGT. 4 GLFG repeats span residues 103-106, 120-123, 132-135, and 147-150; these read GLFG. Residues 105-116 are compositionally biased toward polar residues; that stretch reads FGQQTAQPQQST. The span at 125–146 shows a compositional bias: polar residues; that stretch reads KPTTTTGGLFGNSAQNNSTTSG. The span at 153-172 shows a compositional bias: polar residues; it reads VGSTGSLMGGNSTQNTSNMN. 4 GLFG repeats span residues 175-178, 190-193, 204-207, and 220-223; these read GLFG. The segment covering 228 to 257 has biased composition (polar residues); that stretch reads PQTNTAPGLGNTVSTQPSFAWSKPSTGSNL. Residues 398–425 are a coiled coil; sequence ILKAQSRNVEIEKRILKLGTQLATLKNR.

Belongs to the nucleoporin GLFG family. As to quaternary structure, component of the nuclear pore complex (NPC). NPC constitutes the exclusive means of nucleocytoplasmic transport. NPCs allow the passive diffusion of ions and small molecules and the active, nuclear transport receptor-mediated bidirectional transport of macromolecules such as proteins, RNAs, ribonucleoparticles (RNPs), and ribosomal subunits across the nuclear envelope. Due to its 8-fold rotational symmetry, all subunits are present with 8 copies or multiples thereof. NUP57 is part of the NUP57 subcomplex (NIC96, NSP1, NUP49, NUP57) interacting with NUP49 and NSP1. Interacts through its FG repeats with karyopherins.

Its subcellular location is the nucleus. The protein localises to the nuclear pore complex. It is found in the nucleus membrane. Functionally, functions as a component of the nuclear pore complex (NPC). NPC components, collectively referred to as nucleoporins (NUPs), can play the role of both NPC structural components and of docking or interaction partners for transiently associated nuclear transport factors. Active directional transport is assured by both, a Phe-Gly (FG) repeat affinity gradient for these transport factors across the NPC and a transport cofactor concentration gradient across the nuclear envelope (GSP1 and GSP2 GTPases associated predominantly with GTP in the nucleus, with GDP in the cytoplasm). NUP57 plays an important role in several nuclear transport pathways including poly(A)+ RNA, tRNA, and pre-ribosome transport. The chain is Nucleoporin NUP57 (NUP57) from Saccharomyces cerevisiae (strain ATCC 204508 / S288c) (Baker's yeast).